Here is a 56-residue protein sequence, read N- to C-terminus: Large ribosomal subunit protein eL37 (56 aa).

Zn(2+) is bound by residues Cys19, Cys22, Cys34, and Cys37. The segment at 19–37 adopts a C4-type zinc-finger fold; sequence CRRCGRLSYNFNRKTCVAC.

This sequence belongs to the eukaryotic ribosomal protein eL37 family. The cofactor is Zn(2+).

Functionally, binds to the 23S rRNA. The chain is Large ribosomal subunit protein eL37 from Methanothrix thermoacetophila (strain DSM 6194 / JCM 14653 / NBRC 101360 / PT) (Methanosaeta thermophila).